Here is a 1252-residue protein sequence, read N- to C-terminus: Elongator complex protein 1 (1252 aa).

The mediates dimerization stretch occupies residues Val-814–Gln-1252. A Phosphoserine modification is found at Ser-1094. Residues Ser-1097–Asn-1116 form a disordered region. A compositionally biased stretch (basic residues) spans Arg-1106–Asn-1116. The required for binding to tRNA stretch occupies residues Phe-1111–Pro-1129.

It belongs to the ELP1/IKA1 family. In terms of assembly, homodimer. Component of the elongator complex composed of Elp1, Elp2, Elp3, Elp4, Elp5 and Elp6. The elongator complex associates with and stabilizes microtubules; efficient interaction requires the full complex.

The protein resides in the cytoplasm. It localises to the nucleus. Its subcellular location is the cytoskeleton. It is found in the spindle. The protein operates within tRNA modification; 5-methoxycarbonylmethyl-2-thiouridine-tRNA biosynthesis. Its function is as follows. Component of the elongator complex, which is required for multiple tRNA modifications, including mcm5U (5-methoxycarbonylmethyl uridine), mcm5s2U (5-methoxycarbonylmethyl-2-thiouridine), and ncm5U (5-carbamoylmethyl uridine). The elongator complex catalyzes formation of carboxymethyluridine in the wobble base at position 34 in tRNAs. ELP1 binds to tRNA, mediating interaction of the elongator complex with tRNA. Binding by the elongator complex stabilizes microtubules and promotes their growth. This induces central spindle asymmetry, promoting polarized signaling endosome trafficking during asymmetric cell division and cell fate assignation of sensory organ precursor cells. Involved in protein synthesis-dependent long-term memory formation, probably as part of the elongator complex. The chain is Elongator complex protein 1 from Drosophila melanogaster (Fruit fly).